A 266-amino-acid polypeptide reads, in one-letter code: Undecaprenyl-diphosphatase (266 aa).

A run of 8 helical transmembrane segments spans residues 1 to 21 (MEFF…FIPI), 39 to 59 (PGSS…FWYF), 87 to 107 (IFIG…FVPG), 117 to 137 (LSIA…DIST), 153 to 173 (YIGI…GATI), 189 to 209 (FSFL…FFSA), 216 to 236 (FPFL…LLAI), and 246 to 266 (HGLK…LFNL).

The protein belongs to the UppP family.

It is found in the cell inner membrane. The enzyme catalyses di-trans,octa-cis-undecaprenyl diphosphate + H2O = di-trans,octa-cis-undecaprenyl phosphate + phosphate + H(+). Catalyzes the dephosphorylation of undecaprenyl diphosphate (UPP). Confers resistance to bacitracin. The polypeptide is Undecaprenyl-diphosphatase (Prochlorococcus marinus subsp. pastoris (strain CCMP1986 / NIES-2087 / MED4)).